Here is a 324-residue protein sequence, read N- to C-terminus: Heparan sulfate 2-O-sulfotransferase hst-2 (324 aa).

Residues 1–6 (MLWKKR) lie on the Cytoplasmic side of the membrane. A helical; Signal-anchor for type II membrane protein transmembrane segment spans residues 7–24 (KVLYFAGISVFILILLLL). Over 25-324 (KLNSKPKANV…QYHFEKIKPS (300 aa)) the chain is Lumenal. 2 N-linked (GlcNAc...) asparagine glycosylation sites follow: N75 and N94. Active-site residues include H107 and H109. N-linked (GlcNAc...) asparagine glycosylation is present at N161. 2 cysteine pairs are disulfide-bonded: C167/C175 and C188/C194.

Belongs to the sulfotransferase 3 family. As to quaternary structure, homotrimer. In terms of tissue distribution, present in the hypodermis, muscle, distal tip cells (DTCs) and in neurons (at protein level).

The protein localises to the golgi apparatus membrane. Catalyzes the transfer of sulfate to the C2-position of selected hexuronic acid residues within the maturing heparan sulfate (HS). Involved in cell adhesion and guidance by specifically modifying proteoglycans in the extracellular matrix and on the cell surface that are essential for axon migrations. The sequence is that of Heparan sulfate 2-O-sulfotransferase hst-2 from Caenorhabditis elegans.